A 288-amino-acid polypeptide reads, in one-letter code: Serpentine receptor class gamma-1 (288 aa).

7 helical membrane passes run Leu-25–Ile-45, Phe-59–Phe-79, Phe-118–Leu-138, Leu-148–Ile-168, Phe-197–Ile-217, Val-238–Leu-258, and Ile-268–Met-288.

The protein belongs to the nematode receptor-like protein srg family.

It is found in the membrane. This is Serpentine receptor class gamma-1 (srg-1) from Caenorhabditis elegans.